The sequence spans 397 residues: Enoyl-[acyl-carrier-protein] reductase [NADH] (397 aa).

NAD(+) is bound by residues 48 to 53, 74 to 75, 111 to 112, and 139 to 140; these read GASTGY, FE, DA, and VA. Residue Tyr-225 coordinates substrate. Tyr-235 (proton donor) is an active-site residue. Residues Lys-244 and 273-275 each bind NAD(+); that span reads VVT.

The protein belongs to the TER reductase family. Monomer.

The catalysed reaction is a 2,3-saturated acyl-[ACP] + NAD(+) = a (2E)-enoyl-[ACP] + NADH + H(+). It functions in the pathway lipid metabolism; fatty acid biosynthesis. Its function is as follows. Involved in the final reduction of the elongation cycle of fatty acid synthesis (FAS II). Catalyzes the reduction of a carbon-carbon double bond in an enoyl moiety that is covalently linked to an acyl carrier protein (ACP). The sequence is that of Enoyl-[acyl-carrier-protein] reductase [NADH] from Burkholderia pseudomallei (strain 668).